The sequence spans 415 residues: Putative transcription factor BOFH (415 aa).

A disordered region spans residues 159 to 221; that stretch reads SQEPVQHQDQ…NEGEDDDGMD (63 aa). A compositionally biased stretch (gly residues) spans 174–183; that stretch reads INGGGRGGYW. A compositionally biased stretch (basic residues) spans 193-202; sequence QQQRRRKKRL. The span at 206–220 shows a compositional bias: acidic residues; the sequence is ETDDDGNEGEDDDGM. DNA-binding regions lie at residues 234–238, 303–310, and 374–377; these read REHPF, NKPKMRHY, and YVPT.

This sequence belongs to the FLO/LFY family. Acts in the floral primordia.

Its subcellular location is the nucleus. In terms of biological role, controls floral meristem identity. Is required very early in flower development and may act here as a transcription factor. The sequence is that of Putative transcription factor BOFH from Brassica oleracea var. botrytis (Cauliflower).